A 393-amino-acid chain; its full sequence is tRNA-specific 2-thiouridylase MnmA (393 aa).

ATP is bound by residues 19-26 (AMSGGVDS) and leucine 45. Catalysis depends on cysteine 113, which acts as the Nucleophile. A disulfide bond links cysteine 113 and cysteine 210. Glycine 137 is an ATP binding site. Positions 160–162 (RDQ) are interaction with tRNA. The active-site Cysteine persulfide intermediate is the cysteine 210.

Belongs to the MnmA/TRMU family.

The protein resides in the cytoplasm. The enzyme catalyses S-sulfanyl-L-cysteinyl-[protein] + uridine(34) in tRNA + AH2 + ATP = 2-thiouridine(34) in tRNA + L-cysteinyl-[protein] + A + AMP + diphosphate + H(+). In terms of biological role, catalyzes the 2-thiolation of uridine at the wobble position (U34) of tRNA, leading to the formation of s(2)U34. The polypeptide is tRNA-specific 2-thiouridylase MnmA (Bradyrhizobium diazoefficiens (strain JCM 10833 / BCRC 13528 / IAM 13628 / NBRC 14792 / USDA 110)).